The following is a 415-amino-acid chain: MIDKKLLLQDFEMVALSLKKRNNAMDDALERLREVITHYKKQLIELEGLQAFQNKVSKEFGIKMAQKVDTSDLKKELENNKIKLNELSKSVGELEQQIDLRLSIIPNLVDEKTPLGASEEDNIEIKKILTPRNFTFKPKEHFELAQQNGWIDFESGVKLAKSRFSVIRGFGAKIYRALIHLMLDFNEKNGFEIIYTPALVNEKMLFGTGQLPKFKEDVFKIENENLYLIPTAEVTLTNLYNDTIVSVEKLPIKMTAHTPCFRSEAGSAGKDTRGMIRQHQFDKVELVAITHPKESDAMQEHMLESASEILKALELPHRFVQLCSADLGFSASNTIDIEVWLPGQNCYREISSVSNTRDFQARRAKIRFKENQKNQLAHTLNGSSLAVGRTMVALMENHQQADGSIHIPKALEKYL.

Threonine 231–glutamate 233 is an L-serine binding site. Arginine 262 to glutamate 264 provides a ligand contact to ATP. L-serine is bound at residue glutamate 285. Glutamate 349–serine 352 contacts ATP. Serine 383 provides a ligand contact to L-serine.

The protein belongs to the class-II aminoacyl-tRNA synthetase family. Type-1 seryl-tRNA synthetase subfamily. In terms of assembly, homodimer. The tRNA molecule binds across the dimer.

It localises to the cytoplasm. It carries out the reaction tRNA(Ser) + L-serine + ATP = L-seryl-tRNA(Ser) + AMP + diphosphate + H(+). The catalysed reaction is tRNA(Sec) + L-serine + ATP = L-seryl-tRNA(Sec) + AMP + diphosphate + H(+). Its pathway is aminoacyl-tRNA biosynthesis; selenocysteinyl-tRNA(Sec) biosynthesis; L-seryl-tRNA(Sec) from L-serine and tRNA(Sec): step 1/1. Its function is as follows. Catalyzes the attachment of serine to tRNA(Ser). Is also able to aminoacylate tRNA(Sec) with serine, to form the misacylated tRNA L-seryl-tRNA(Sec), which will be further converted into selenocysteinyl-tRNA(Sec). The polypeptide is Serine--tRNA ligase (Helicobacter pylori (strain Shi470)).